The following is a 247-amino-acid chain: Triosephosphate isomerase (247 aa).

9–11 provides a ligand contact to substrate; that stretch reads NWK. The Electrophile role is filled by His-94. Glu-166 (proton acceptor) is an active-site residue. Substrate is bound by residues Gly-172, Ser-211, and 232-233; that span reads GG.

This sequence belongs to the triosephosphate isomerase family. As to quaternary structure, homodimer.

It is found in the cytoplasm. The catalysed reaction is D-glyceraldehyde 3-phosphate = dihydroxyacetone phosphate. The protein operates within carbohydrate biosynthesis; gluconeogenesis. It functions in the pathway carbohydrate degradation; glycolysis; D-glyceraldehyde 3-phosphate from glycerone phosphate: step 1/1. Involved in the gluconeogenesis. Catalyzes stereospecifically the conversion of dihydroxyacetone phosphate (DHAP) to D-glyceraldehyde-3-phosphate (G3P). The protein is Triosephosphate isomerase of Cupriavidus taiwanensis (strain DSM 17343 / BCRC 17206 / CCUG 44338 / CIP 107171 / LMG 19424 / R1) (Ralstonia taiwanensis (strain LMG 19424)).